Consider the following 288-residue polypeptide: 4-diphosphocytidyl-2-C-methyl-D-erythritol kinase (288 aa).

Residue lysine 19 is part of the active site. 102–112 (PMGGGIGGGSS) is a binding site for ATP. Aspartate 144 is an active-site residue.

Belongs to the GHMP kinase family. IspE subfamily.

The enzyme catalyses 4-CDP-2-C-methyl-D-erythritol + ATP = 4-CDP-2-C-methyl-D-erythritol 2-phosphate + ADP + H(+). The protein operates within isoprenoid biosynthesis; isopentenyl diphosphate biosynthesis via DXP pathway; isopentenyl diphosphate from 1-deoxy-D-xylulose 5-phosphate: step 3/6. Its function is as follows. Catalyzes the phosphorylation of the position 2 hydroxy group of 4-diphosphocytidyl-2C-methyl-D-erythritol. The sequence is that of 4-diphosphocytidyl-2-C-methyl-D-erythritol kinase from Pseudomonas savastanoi pv. phaseolicola (strain 1448A / Race 6) (Pseudomonas syringae pv. phaseolicola (strain 1448A / Race 6)).